The following is a 65-amino-acid chain: Alpha-toxin Bot11 (65 aa).

Positions 2–64 constitute an LCN-type CS-alpha/beta domain; the sequence is KDGYIVDDRN…VRTVQAGRCR (63 aa). 4 disulfides stabilise this stretch: cysteine 12–cysteine 63, cysteine 16–cysteine 36, cysteine 22–cysteine 46, and cysteine 26–cysteine 48.

The protein belongs to the long (4 C-C) scorpion toxin superfamily. Sodium channel inhibitor family. Alpha subfamily. In terms of tissue distribution, expressed by the venom gland.

The protein resides in the secreted. In terms of biological role, alpha toxins bind voltage-independently at site-3 of sodium channels (Nav) and inhibit the inactivation of the activated channels, thereby blocking neuronal transmission. This Buthus occitanus tunetanus (Common European scorpion) protein is Alpha-toxin Bot11.